Reading from the N-terminus, the 222-residue chain is Pyridoxine/pyridoxamine 5'-phosphate oxidase (222 aa).

Residues 16–19 (RVSY) and K75 each bind substrate. FMN is bound by residues 70-75 (RTVLCK), 85-86 (FT), K92, and Q114. The substrate site is built by Y132, R136, and S140. Residues 149 to 150 (QS) and W195 each bind FMN. A substrate-binding site is contributed by 201-203 (RLH). R205 contributes to the FMN binding site.

This sequence belongs to the pyridoxamine 5'-phosphate oxidase family. Homodimer. FMN serves as cofactor.

The catalysed reaction is pyridoxamine 5'-phosphate + O2 + H2O = pyridoxal 5'-phosphate + H2O2 + NH4(+). The enzyme catalyses pyridoxine 5'-phosphate + O2 = pyridoxal 5'-phosphate + H2O2. The protein operates within cofactor metabolism; pyridoxal 5'-phosphate salvage; pyridoxal 5'-phosphate from pyridoxamine 5'-phosphate: step 1/1. It participates in cofactor metabolism; pyridoxal 5'-phosphate salvage; pyridoxal 5'-phosphate from pyridoxine 5'-phosphate: step 1/1. In terms of biological role, catalyzes the oxidation of either pyridoxine 5'-phosphate (PNP) or pyridoxamine 5'-phosphate (PMP) into pyridoxal 5'-phosphate (PLP). The sequence is that of Pyridoxine/pyridoxamine 5'-phosphate oxidase from Saccharopolyspora erythraea (strain ATCC 11635 / DSM 40517 / JCM 4748 / NBRC 13426 / NCIMB 8594 / NRRL 2338).